The chain runs to 970 residues: Bifunctional glutamine synthetase adenylyltransferase/adenylyl-removing enzyme (970 aa).

The tract at residues 1–454 (MNSLPPRPSL…HFQQVFAAPQ (454 aa)) is adenylyl removase. An adenylyl transferase region spans residues 468–970 (QAVLASIWAG…WRRVMEEGKA (503 aa)).

It belongs to the GlnE family. Requires Mg(2+) as cofactor.

It carries out the reaction [glutamine synthetase]-O(4)-(5'-adenylyl)-L-tyrosine + phosphate = [glutamine synthetase]-L-tyrosine + ADP. It catalyses the reaction [glutamine synthetase]-L-tyrosine + ATP = [glutamine synthetase]-O(4)-(5'-adenylyl)-L-tyrosine + diphosphate. Involved in the regulation of glutamine synthetase GlnA, a key enzyme in the process to assimilate ammonia. When cellular nitrogen levels are high, the C-terminal adenylyl transferase (AT) inactivates GlnA by covalent transfer of an adenylyl group from ATP to specific tyrosine residue of GlnA, thus reducing its activity. Conversely, when nitrogen levels are low, the N-terminal adenylyl removase (AR) activates GlnA by removing the adenylyl group by phosphorolysis, increasing its activity. The regulatory region of GlnE binds the signal transduction protein PII (GlnB) which indicates the nitrogen status of the cell. The protein is Bifunctional glutamine synthetase adenylyltransferase/adenylyl-removing enzyme of Thioalkalivibrio sulfidiphilus (strain HL-EbGR7).